The chain runs to 252 residues: 4-hydroxy-tetrahydrodipicolinate reductase (252 aa).

8-13 (GALGRM) contributes to the NAD(+) binding site. Position 36 (Arg-36) interacts with NADP(+). NAD(+) contacts are provided by residues 89–91 (GTT) and 114–117 (SSNF). His-146 serves as the catalytic Proton donor/acceptor. His-147 is a (S)-2,3,4,5-tetrahydrodipicolinate binding site. Residue Lys-150 is the Proton donor of the active site. 156–157 (GT) is a binding site for (S)-2,3,4,5-tetrahydrodipicolinate.

Belongs to the DapB family.

It is found in the cytoplasm. It catalyses the reaction (S)-2,3,4,5-tetrahydrodipicolinate + NAD(+) + H2O = (2S,4S)-4-hydroxy-2,3,4,5-tetrahydrodipicolinate + NADH + H(+). The enzyme catalyses (S)-2,3,4,5-tetrahydrodipicolinate + NADP(+) + H2O = (2S,4S)-4-hydroxy-2,3,4,5-tetrahydrodipicolinate + NADPH + H(+). The protein operates within amino-acid biosynthesis; L-lysine biosynthesis via DAP pathway; (S)-tetrahydrodipicolinate from L-aspartate: step 4/4. In terms of biological role, catalyzes the conversion of 4-hydroxy-tetrahydrodipicolinate (HTPA) to tetrahydrodipicolinate. This Methanoculleus marisnigri (strain ATCC 35101 / DSM 1498 / JR1) protein is 4-hydroxy-tetrahydrodipicolinate reductase.